The following is an 885-amino-acid chain: Translation initiation factor IF-2 (885 aa).

Disordered stretches follow at residues 135–159 (KAKAEAEAKAKAEAEAKAKAKAAAE) and 184–289 (QAEA…PESM). Residues 184–232 (QAEATKRKQDEEAAKAAEKARLLAEENSKRWAEEERQRLEAERYSDHHI) are compositionally biased toward basic and acidic residues. Basic residues predominate over residues 253 to 266 (GRRARNKNTAKSKR). Basic and acidic residues predominate over residues 267 to 276 (GGKDARDGRE). One can recognise a tr-type G domain in the interval 385–554 (PRAPVVTIMG…LLQAEVLELK (170 aa)). The segment at 394–401 (GHVDHGKT) is G1. GTP is bound at residue 394–401 (GHVDHGKT). Positions 419–423 (GITQH) are G2. The tract at residues 440–443 (DTPG) is G3. GTP is bound by residues 440 to 444 (DTPGH) and 494 to 497 (NKMD). Residues 494–497 (NKMD) form a G4 region. The interval 530-532 (SAK) is G5.

Belongs to the TRAFAC class translation factor GTPase superfamily. Classic translation factor GTPase family. IF-2 subfamily.

It localises to the cytoplasm. One of the essential components for the initiation of protein synthesis. Protects formylmethionyl-tRNA from spontaneous hydrolysis and promotes its binding to the 30S ribosomal subunits. Also involved in the hydrolysis of GTP during the formation of the 70S ribosomal complex. This chain is Translation initiation factor IF-2, found in Shewanella sp. (strain MR-7).